The sequence spans 396 residues: Cathepsin E (396 aa).

Residues 1–19 (MKTLLLLLLVLLELGEAQG) form the signal peptide. A propeptide spans 20-53 (SLHRVPLRRHPSLKKKLRARSQLSEFWKSHNLDM) (activation peptide). A Peptidase A1 domain is found at 78–396 (YFGTISIGSP…NRVGLAPAVP (319 aa)). Residue Asn90 is glycosylated (N-linked (GlcNAc...) asparagine). Residue Asp96 is part of the active site. Intrachain disulfides connect Cys109/Cys114 and Cys272/Cys276. Asp281 is an active-site residue. An intrachain disulfide couples Cys314 to Cys351.

The protein belongs to the peptidase A1 family. In terms of assembly, homodimer; disulfide-linked. Post-translationally, glycosylated. The nature of the carbohydrate chain varies between cell types. In fibroblasts, the proenzyme contains a high mannose-type oligosaccharide, while the mature enzyme contains a complex-type oligosaccharide. In erythrocyte membranes, both the proenzyme and mature enzyme contain a complex-type oligosaccharide. Two forms are produced by autocatalytic cleavage, form I begins at Ile-54, form II begins at Thr-57. In terms of tissue distribution, expressed abundantly in the stomach, the Clara cells of the lung and activated B-lymphocytes, and at lower levels in lymph nodes, skin and spleen. Not expressed in resting B-lymphocytes.

The protein resides in the endosome. It catalyses the reaction Similar to cathepsin D, but slightly broader specificity.. May have a role in immune function. Probably involved in the processing of antigenic peptides during MHC class II-mediated antigen presentation. May play a role in activation-induced lymphocyte depletion in the thymus, and in neuronal degeneration and glial cell activation in the brain. The protein is Cathepsin E (CTSE) of Homo sapiens (Human).